Here is a 597-residue protein sequence, read N- to C-terminus: MAEIIQERIEDRLPELEQLERIGLFSHAEIKAIIKKASDLEYKIQRRTLFKEDFINYVQYEINLLELIQRRRTRIGYSFKKDEIENSIVHRVQGVFQRASAKWKDDVQLWLSYVAFCKKWATKTRLSKVFSAMLAIHSNKPALWIMAAKWEMEDRLSSESARQLFLRALRFHPECPKLYKEYFRMELMHAEKLRKEKEEFEKASMDVENPDYSEEILKGELAWIIYKNSVSIIKGAEFHVSLLSIAQLFDFAKDLQKEIYDDLQALHTDDPLTWDYVARRELEIESQTEEQPTTKQAKAVEVGRKEERCCAVYEEAVKTLPTEAMWKCYITFCLERFTKKSNSGFLRGKRLERTMTVFRKAHELKLLSECQYKQLSVSLLCYNFLREALEVAVAGTELFRDSGTMWQLKLQVLIESKSPDIAMLFEEAFVHLKPQVCLPLWISWAEWSEGAKSQEDTEAVFKKALLAVIGADSVTLKNKYLDWAYRSGGYKKARAVFKSLQESRPFSVDFFRKMIQFEKEQESCNMANIREYYERALREFGSADSDLWMDYMKEELNHPLGRPENCGQIYWRAMKMLQGESAEAFVAKHAMHQTGHL.

HAT repeat units follow at residues 121–153 (ATKTRLSKVFSAMLAIHSNKPALWIMAAKWEME), 156–188 (LSSESARQLFLRALRFHPECPKLYKEYFRMELM), 304–335 (RKEERCCAVYEEAVKTLPTEAMWKCYITFCLE), 488–520 (GGYKKARAVFKSLQESRPFSVDFFRKMIQFEKE), and 524–557 (CNMANIREYYERALREFGSADSDLWMDYMKEELN).

The protein belongs to the UTP6 family. As to quaternary structure, part of the small subunit (SSU) processome, composed of more than 70 proteins and the RNA chaperone small nucleolar RNA (snoRNA) U3.

It localises to the nucleus. It is found in the nucleolus. In terms of biological role, part of the small subunit (SSU) processome, first precursor of the small eukaryotic ribosomal subunit. During the assembly of the SSU processome in the nucleolus, many ribosome biogenesis factors, an RNA chaperone and ribosomal proteins associate with the nascent pre-rRNA and work in concert to generate RNA folding, modifications, rearrangements and cleavage as well as targeted degradation of pre-ribosomal RNA by the RNA exosome. Involved in nucleolar processing of pre-18S ribosomal RNA. The chain is U3 small nucleolar RNA-associated protein 6 homolog from Homo sapiens (Human).